The following is a 170-amino-acid chain: Photosystem I assembly protein Ycf3 (170 aa).

TPR repeat units lie at residues 35 to 68 (AFTY…EIDP), 72 to 105 (SYIL…NPFL), and 120 to 153 (GEQA…TPGN).

The protein belongs to the Ycf3 family.

The protein resides in the plastid. It localises to the chloroplast thylakoid membrane. Functionally, essential for the assembly of the photosystem I (PSI) complex. May act as a chaperone-like factor to guide the assembly of the PSI subunits. This chain is Photosystem I assembly protein Ycf3, found in Triticum aestivum (Wheat).